The sequence spans 343 residues: KRR1 small subunit processome component homolog (343 aa).

Residues 126–194 (DIIKIGNLVH…VRDIVLETMN (69 aa)) enclose the KH domain. Positions 230–246 (KNKNISKRKQPKNKKPK) are enriched in basic residues. The interval 230-343 (KNKNISKRKQ…LMKANKKNRS (114 aa)) is disordered. 2 stretches are compositionally biased toward basic and acidic residues: residues 272–303 (LNKE…RNKD) and 318–331 (RPAE…DALK). The stretch at 272–341 (LNKEQKQAKK…AKLMKANKKN (70 aa)) forms a coiled coil. Basic residues predominate over residues 333–343 (KLMKANKKNRS).

The protein belongs to the KRR1 family. As to quaternary structure, monomer. Component of the ribosomal small subunit (SSU) processome.

It localises to the nucleus. The protein localises to the nucleolus. Functionally, required for 40S ribosome biogenesis. Involved in nucleolar processing of pre-18S ribosomal RNA and ribosome assembly. Binds to RNA. Required for female germline development, cell viability during eye development and for survival of dividing cells and epithelial cells during early wing disk development. This chain is KRR1 small subunit processome component homolog, found in Drosophila virilis (Fruit fly).